The sequence spans 388 residues: Acetate kinase (388 aa).

Asn8 serves as a coordination point for Mg(2+). Lys15 lines the ATP pocket. Position 88 (Arg88) interacts with substrate. The active-site Proton donor/acceptor is Asp144. ATP contacts are provided by residues 202–206 (HLGNG), 276–278 (DMR), and 321–325 (GVGEN). Glu375 is a Mg(2+) binding site.

The protein belongs to the acetokinase family. In terms of assembly, homodimer. It depends on Mg(2+) as a cofactor. Mn(2+) serves as cofactor.

The protein localises to the cytoplasm. The enzyme catalyses acetate + ATP = acetyl phosphate + ADP. Its pathway is metabolic intermediate biosynthesis; acetyl-CoA biosynthesis; acetyl-CoA from acetate: step 1/2. Catalyzes the formation of acetyl phosphate from acetate and ATP. Can also catalyze the reverse reaction. This chain is Acetate kinase, found in Mycoplasmoides gallisepticum (strain R(low / passage 15 / clone 2)) (Mycoplasma gallisepticum).